The following is a 680-amino-acid chain: Potassium-transporting ATPase ATP-binding subunit (680 aa).

4 consecutive transmembrane segments (helical) span residues 37 to 57, 69 to 89, 223 to 243, and 257 to 277; these read VIFVTEAMAALVTLFFVLDVA, IAAWLWFTVLFATFAEAVAEG, ILLSGLTLIFLIAVVTLWGLA, and ALLVTLIPTTIGGLLSAIGIA. Aspartate 307 acts as the 4-aspartylphosphate intermediate in catalysis. ATP contacts are provided by residues aspartate 344, glutamate 348, 375-382, and lysine 393; that span reads FTAETRLS. The Mg(2+) site is built by aspartate 516 and aspartate 520. The next 3 helical transmembrane spans lie at 586–606, 614–634, and 652–672; these read FAIIPALFVTTYPALGVLNIM, AILSAVIFNALIIVALIPLAL, and LLVYGLGGLVLPFAGIKLIDL.

It belongs to the cation transport ATPase (P-type) (TC 3.A.3) family. Type IA subfamily. In terms of assembly, the system is composed of three essential subunits: KdpA, KdpB and KdpC.

The protein localises to the cell inner membrane. The catalysed reaction is K(+)(out) + ATP + H2O = K(+)(in) + ADP + phosphate + H(+). In terms of biological role, part of the high-affinity ATP-driven potassium transport (or Kdp) system, which catalyzes the hydrolysis of ATP coupled with the electrogenic transport of potassium into the cytoplasm. This subunit is responsible for energy coupling to the transport system and for the release of the potassium ions to the cytoplasm. The protein is Potassium-transporting ATPase ATP-binding subunit of Rhizobium meliloti (strain 1021) (Ensifer meliloti).